A 137-amino-acid chain; its full sequence is Large ribosomal subunit protein uL16 (137 aa).

The protein belongs to the universal ribosomal protein uL16 family. In terms of assembly, part of the 50S ribosomal subunit.

Functionally, binds 23S rRNA and is also seen to make contacts with the A and possibly P site tRNAs. This Streptococcus thermophilus (strain CNRZ 1066) protein is Large ribosomal subunit protein uL16.